The chain runs to 652 residues: Thioredoxin reductase 3 (652 aa).

Over residues 1-12 (MEKPPSPPPPPR) the composition is skewed to pro residues. The disordered stretch occupies residues 1-62 (MEKPPSPPPP…TSRPSSEARE (62 aa)). Position 34 is an asymmetric dimethylarginine; alternate (Arg34). The residue at position 34 (Arg34) is an Omega-N-methylarginine; alternate. A Phosphoserine modification is found at Ser50. One can recognise a Glutaredoxin domain in the interval 65–165 (RRRLRDLIEG…KLLQDDSAHD (101 aa)). 167 to 196 (DLIIIGGGSGGLSCAKEAANLGKKVMVLDF) is a binding site for FAD. Cys212 and Cys217 are disulfide-bonded. At Lys388 the chain carries N6-succinyllysine. His625 (proton acceptor) is an active-site residue. Positions 650–651 (CU) form a cross-link, cysteinyl-selenocysteine (Cys-Sec). Position 651 (Sec651) is a non-standard amino acid, selenocysteine.

Belongs to the class-I pyridine nucleotide-disulfide oxidoreductase family. Homodimer. Requires FAD as cofactor. In terms of tissue distribution, expressed preferentially in testis where it is found in spermatids and spermatocytes but not in sperm. In elongating spermatids, expressed at the site of mitochondrial sheath formation. Low levels in other tissues including heart, lung, liver, kidney, brain, muscle and prostate.

It localises to the cytoplasm. The protein localises to the nucleus. It is found in the microsome. Its subcellular location is the endoplasmic reticulum. The enzyme catalyses [thioredoxin]-dithiol + NADP(+) = [thioredoxin]-disulfide + NADPH + H(+). Displays thioredoxin reductase, glutaredoxin and glutathione reductase activities. Catalyzes disulfide bond isomerization. Promotes disulfide bond formation between GPX4 and various sperm proteins and may play a role in sperm maturation by promoting formation of sperm structural components. The sequence is that of Thioredoxin reductase 3 from Mus musculus (Mouse).